Consider the following 235-residue polypeptide: Effector CFEM1 (235 aa).

Residues 1 to 17 (MKFSAPVLAIFLASASA) form the signal peptide. One can recognise a CFEM domain in the interval 18 to 114 (QSTAELAAQI…ASASASSSAS (97 aa)). 4 cysteine pairs are disulfide-bonded: cysteine 30–cysteine 72, cysteine 34–cysteine 67, cysteine 44–cysteine 51, and cysteine 53–cysteine 88. Aspartate 48 contacts heme. Threonine 211 is lipidated: GPI-anchor amidated threonine. Positions 212–235 (AAGVKEEASFFIPAAVALFAVFAV) are cleaved as a propeptide — removed in mature form.

Belongs to the RBT5 family.

Its subcellular location is the cell membrane. It is found in the secreted. The protein localises to the host cytoplasm. The protein resides in the host nucleus. It localises to the host cell membrane. In terms of biological role, appears to function during host infection, and may play a role in suppressing the host immune response. This Marssonina brunnea f. sp. multigermtubi (strain MB_m1) (Marssonina leaf spot fungus) protein is Effector CFEM1.